The chain runs to 714 residues: Fatty acid oxidation complex subunit alpha (714 aa).

Positions 1–190 (MDTVSAFKLE…KAGLVDEVVP (190 aa)) are enoyl-CoA hydratase. The interval 306–714 (GSLRSVAVLG…TFWPADERLT (409 aa)) is 3-hydroxyacyl-CoA dehydrogenase.

In the N-terminal section; belongs to the enoyl-CoA hydratase/isomerase family. The protein in the central section; belongs to the 3-hydroxyacyl-CoA dehydrogenase family. As to quaternary structure, heterotetramer of two alpha chains (FadJ) and two beta chains (FadI).

The protein resides in the cytoplasm. It catalyses the reaction a (3S)-3-hydroxyacyl-CoA = a (2E)-enoyl-CoA + H2O. The catalysed reaction is a 4-saturated-(3S)-3-hydroxyacyl-CoA = a (3E)-enoyl-CoA + H2O. The enzyme catalyses a (3S)-3-hydroxyacyl-CoA + NAD(+) = a 3-oxoacyl-CoA + NADH + H(+). It carries out the reaction (3S)-3-hydroxybutanoyl-CoA = (3R)-3-hydroxybutanoyl-CoA. It functions in the pathway lipid metabolism; fatty acid beta-oxidation. In terms of biological role, catalyzes the formation of a hydroxyacyl-CoA by addition of water on enoyl-CoA. Also exhibits 3-hydroxyacyl-CoA epimerase and 3-hydroxyacyl-CoA dehydrogenase activities. The chain is Fatty acid oxidation complex subunit alpha from Klebsiella pneumoniae subsp. pneumoniae (strain ATCC 700721 / MGH 78578).